Reading from the N-terminus, the 350-residue chain is Sodium/calcium exchanger MaX1 (350 aa).

The next 10 helical transmembrane spans lie at 4–24, 39–59, 69–89, 101–121, 125–145, 202–222, 242–264, 276–296, 302–322, and 330–350; these read VNFLILLLGLVFLVKGSDYFV, FVIGLTLVAIGTSIPELASSI, IVIGNVVGSNIANVGLIVGVA, MLKRDGYIMLFSAVLFFVFAF, LSMLEAGLFVLLYIAYVFFLF, GGFAKDIFTLVLSCAAIVIGA, VIGTTLVAVGTSLPELVVTVSAA, VIGSNITNIFLILGLSGLFYP, MSLFFTTPVMIAISLILLIFI, and RWEGVVLMMFYVAFLVVLFYI.

The protein belongs to the Ca(2+):cation antiporter (CaCA) (TC 2.A.19) family.

Its subcellular location is the cell membrane. Its activity is regulated as follows. Calcium transport is inhibited by Na(+), K(+), Li(+), Mg(2+) or Mn(2+). Catalyzes Na(+)/Ca(2+) exchange. The transport is electrogenic with a likely stoichiometry of 3 or more Na(+) for each Ca(2+). Is K(+)-independent. The protein is Sodium/calcium exchanger MaX1 (maX1) of Methanosarcina acetivorans (strain ATCC 35395 / DSM 2834 / JCM 12185 / C2A).